A 466-amino-acid chain; its full sequence is Soluble pyridine nucleotide transhydrogenase (466 aa).

Residue 36–45 participates in FAD binding; that stretch reads ERYHNVGGGC.

It belongs to the class-I pyridine nucleotide-disulfide oxidoreductase family. FAD is required as a cofactor.

It localises to the cytoplasm. It catalyses the reaction NAD(+) + NADPH = NADH + NADP(+). In terms of biological role, conversion of NADPH, generated by peripheral catabolic pathways, to NADH, which can enter the respiratory chain for energy generation. The polypeptide is Soluble pyridine nucleotide transhydrogenase (Salmonella paratyphi C (strain RKS4594)).